The primary structure comprises 109 residues: Ribonuclease P protein component (109 aa).

Belongs to the RnpA family. Consists of a catalytic RNA component (M1 or rnpB) and a protein subunit.

It carries out the reaction Endonucleolytic cleavage of RNA, removing 5'-extranucleotides from tRNA precursor.. RNaseP catalyzes the removal of the 5'-leader sequence from pre-tRNA to produce the mature 5'-terminus. It can also cleave other RNA substrates such as 4.5S RNA. The protein component plays an auxiliary but essential role in vivo by binding to the 5'-leader sequence and broadening the substrate specificity of the ribozyme. The sequence is that of Ribonuclease P protein component from Streptococcus agalactiae serotype III (strain NEM316).